A 249-amino-acid polypeptide reads, in one-letter code: 5'-nucleotidase SurE (249 aa).

A divalent metal cation-binding residues include D9, D10, S40, and N92.

This sequence belongs to the SurE nucleotidase family. Requires a divalent metal cation as cofactor.

The protein resides in the cytoplasm. It carries out the reaction a ribonucleoside 5'-phosphate + H2O = a ribonucleoside + phosphate. Functionally, nucleotidase that shows phosphatase activity on nucleoside 5'-monophosphates. In Shewanella baltica (strain OS223), this protein is 5'-nucleotidase SurE.